We begin with the raw amino-acid sequence, 103 residues long: Large ribosomal subunit protein bL21 (103 aa).

This sequence belongs to the bacterial ribosomal protein bL21 family. In terms of assembly, part of the 50S ribosomal subunit. Contacts protein L20.

Its function is as follows. This protein binds to 23S rRNA in the presence of protein L20. This Salmonella paratyphi A (strain ATCC 9150 / SARB42) protein is Large ribosomal subunit protein bL21.